The primary structure comprises 382 residues: Prophage ps2 probable integrase (382 aa).

The region spanning 63-142 (AKFTDIAEEW…TLNLIFDYAV (80 aa)) is the Core-binding (CB) domain. The Tyr recombinase domain maps to 170–376 (IQNKYLEQNE…TENMKSSIID (207 aa)). Residues R209, K242, H326, R329, and H352 contribute to the active site. Y363 acts as the O-(3'-phospho-DNA)-tyrosine intermediate in catalysis.

Belongs to the 'phage' integrase family.

In Lactococcus lactis subsp. lactis (strain IL1403) (Streptococcus lactis), this protein is Prophage ps2 probable integrase (ps201).